The sequence spans 344 residues: Dihydroorotase (344 aa).

Zn(2+)-binding residues include histidine 13 and histidine 15. Substrate is bound by residues 15-17 (HVR) and asparagine 41. 3 residues coordinate Zn(2+): lysine 99, histidine 136, and histidine 174. An N6-carboxylysine modification is found at lysine 99. Residue histidine 136 coordinates substrate. Leucine 219 provides a ligand contact to substrate. Aspartate 247 serves as a coordination point for Zn(2+). Aspartate 247 is a catalytic residue. Residues histidine 251 and alanine 263 each coordinate substrate.

This sequence belongs to the metallo-dependent hydrolases superfamily. DHOase family. Class II DHOase subfamily. Homodimer. Zn(2+) serves as cofactor.

It catalyses the reaction (S)-dihydroorotate + H2O = N-carbamoyl-L-aspartate + H(+). The protein operates within pyrimidine metabolism; UMP biosynthesis via de novo pathway; (S)-dihydroorotate from bicarbonate: step 3/3. Its function is as follows. Catalyzes the reversible cyclization of carbamoyl aspartate to dihydroorotate. The protein is Dihydroorotase of Azoarcus sp. (strain BH72).